We begin with the raw amino-acid sequence, 125 residues long: Holo-[acyl-carrier-protein] synthase (125 aa).

2 residues coordinate Mg(2+): Asp-8 and Glu-57.

Belongs to the P-Pant transferase superfamily. AcpS family. Mg(2+) serves as cofactor.

The protein localises to the cytoplasm. It catalyses the reaction apo-[ACP] + CoA = holo-[ACP] + adenosine 3',5'-bisphosphate + H(+). Its function is as follows. Transfers the 4'-phosphopantetheine moiety from coenzyme A to a Ser of acyl-carrier-protein. The chain is Holo-[acyl-carrier-protein] synthase from Neisseria gonorrhoeae (strain ATCC 700825 / FA 1090).